A 495-amino-acid polypeptide reads, in one-letter code: Cobyric acid synthase (495 aa).

Positions 262–445 (CLEIAVIRLP…LHGLFDNHRW (184 aa)) constitute a GATase cobBQ-type domain. Cys-340 functions as the Nucleophile in the catalytic mechanism. His-437 is a catalytic residue.

The protein belongs to the CobB/CobQ family. CobQ subfamily.

It functions in the pathway cofactor biosynthesis; adenosylcobalamin biosynthesis. In terms of biological role, catalyzes amidations at positions B, D, E, and G on adenosylcobyrinic A,C-diamide. NH(2) groups are provided by glutamine, and one molecule of ATP is hydrogenolyzed for each amidation. This chain is Cobyric acid synthase, found in Synechococcus sp. (strain JA-3-3Ab) (Cyanobacteria bacterium Yellowstone A-Prime).